Reading from the N-terminus, the 408-residue chain is Tryptophan synthase beta chain (408 aa).

Position 97 is an N6-(pyridoxal phosphate)lysine (Lys97).

Belongs to the TrpB family. In terms of assembly, tetramer of two alpha and two beta chains. Pyridoxal 5'-phosphate serves as cofactor.

It carries out the reaction (1S,2R)-1-C-(indol-3-yl)glycerol 3-phosphate + L-serine = D-glyceraldehyde 3-phosphate + L-tryptophan + H2O. The protein operates within amino-acid biosynthesis; L-tryptophan biosynthesis; L-tryptophan from chorismate: step 5/5. Functionally, the beta subunit is responsible for the synthesis of L-tryptophan from indole and L-serine. This Pseudomonas syringae pv. syringae protein is Tryptophan synthase beta chain (trpB).